Consider the following 218-residue polypeptide: Small ribosomal subunit protein uS3 (218 aa).

One can recognise a KH type-2 domain in the interval 38-106 (IREYINKRLQ…RVHINIVEIK (69 aa)).

The protein belongs to the universal ribosomal protein uS3 family. In terms of assembly, part of the 30S ribosomal subunit. Forms a tight complex with proteins S10 and S14.

In terms of biological role, binds the lower part of the 30S subunit head. Binds mRNA in the 70S ribosome, positioning it for translation. The polypeptide is Small ribosomal subunit protein uS3 (Geobacillus sp. (strain WCH70)).